The sequence spans 93 residues: Alpha-defensin 6/12 (93 aa).

An N-terminal signal peptide occupies residues 1 to 19 (MKTLILLSALVLLAFQVQA). Positions 20–60 (DPIQNTDEETKTEEQPGEEDQAVSVSFGDPEGTSLQEESLR) are excised as a propeptide. Positions 23 to 54 (QNTDEETKTEEQPGEEDQAVSVSFGDPEGTSL) are disordered. Cystine bridges form between Cys-64–Cys-92, Cys-66–Cys-81, and Cys-71–Cys-91.

This sequence belongs to the alpha-defensin family. As to expression, paneth cells of the small bowel.

It is found in the secreted. In terms of biological role, has broad-spectrum antimicrobial properties. Has antibacterial activity against the Gram-positive bacterium L.monocytogenes EGD and the Gram-negative bacteria E.coli ML-35p and avirulent S.typhimurium 7953, but not against the mouse-virulent S.typhimurium 14028S. Probably contributes to the antimicrobial barrier function of the small bowel mucosa. This chain is Alpha-defensin 6/12 (Defa6), found in Mus musculus (Mouse).